The chain runs to 482 residues: Reduced viability upon starvation protein 167 (482 aa).

S2 carries the post-translational modification N-acetylserine. One can recognise a BAR domain in the interval 17–254 (FRQKFKMGEQ…YFDLNSDIVE (238 aa)). Coiled-coil stretches lie at residues 31–64 (VYEDAERRFQELEQETKKLSEESKRYSTAVNGML) and 174–204 (AKDEERLYKAQAQVEVAQQEYDYYNDLLKTQ). K242 participates in a covalent cross-link: Glycyl lysine isopeptide (Lys-Gly) (interchain with G-Cter in ubiquitin). Phosphoserine; by FUS3 and PHO85 occurs at positions 299, 321, and 379. Residues 382-407 (LTGLGFQQSPQQQQGPPPAYSNPLTS) are disordered. The SH3 domain occupies 421–482 (PGVETVTALY…PGNYVQLNKN (62 aa)). K481 participates in a covalent cross-link: Glycyl lysine isopeptide (Lys-Gly) (interchain with G-Cter in ubiquitin).

Binds to actin. Interacts with ABP1, GYL1, GYP5, PCL2 and YBR108W. In terms of processing, phosphorylated redundantly by cyclin-dependent kinase PHO85 in association with PCL1,2-type cyclins or by MAP kinase FUS3. Phosphorylation inhibits interaction with complexes involved in actin cytoskeleton function.

Its subcellular location is the cytoplasm. It localises to the cytoskeleton. In terms of biological role, component of a cytoskeletal structure that is required for the formation of endocytic vesicles at the plasma membrane level. Could be implicated in cytoskeletal reorganization in response to environmental stresses and could act in the budding site selection mechanism. This chain is Reduced viability upon starvation protein 167 (RVS167), found in Saccharomyces cerevisiae (strain ATCC 204508 / S288c) (Baker's yeast).